The following is a 61-amino-acid chain: Large ribosomal subunit protein uL30 (61 aa).

Belongs to the universal ribosomal protein uL30 family. In terms of assembly, part of the 50S ribosomal subunit.

This chain is Large ribosomal subunit protein uL30, found in Chlorobium phaeobacteroides (strain DSM 266 / SMG 266 / 2430).